We begin with the raw amino-acid sequence, 600 residues long: Glutamine--fructose-6-phosphate aminotransferase [isomerizing] (600 aa).

Cysteine 2 (nucleophile; for GATase activity) is an active-site residue. Residues cysteine 2 to glutamate 217 enclose the Glutamine amidotransferase type-2 domain. 2 SIS domains span residues isoleucine 283–phenylalanine 422 and isoleucine 452–proline 590. Lysine 595 (for Fru-6P isomerization activity) is an active-site residue.

Homodimer.

It is found in the cytoplasm. The catalysed reaction is D-fructose 6-phosphate + L-glutamine = D-glucosamine 6-phosphate + L-glutamate. Catalyzes the first step in hexosamine metabolism, converting fructose-6P into glucosamine-6P using glutamine as a nitrogen source. The sequence is that of Glutamine--fructose-6-phosphate aminotransferase [isomerizing] from Geobacillus kaustophilus (strain HTA426).